Here is a 255-residue protein sequence, read N- to C-terminus: Hydroxyacylglutathione hydrolase (255 aa).

Zn(2+) contacts are provided by H55, H57, D59, H60, H112, D129, and H167.

The protein belongs to the metallo-beta-lactamase superfamily. Glyoxalase II family. As to quaternary structure, monomer. Zn(2+) is required as a cofactor.

The catalysed reaction is an S-(2-hydroxyacyl)glutathione + H2O = a 2-hydroxy carboxylate + glutathione + H(+). It participates in secondary metabolite metabolism; methylglyoxal degradation; (R)-lactate from methylglyoxal: step 2/2. In terms of biological role, thiolesterase that catalyzes the hydrolysis of S-D-lactoyl-glutathione to form glutathione and D-lactic acid. The polypeptide is Hydroxyacylglutathione hydrolase (Halorhodospira halophila (strain DSM 244 / SL1) (Ectothiorhodospira halophila (strain DSM 244 / SL1))).